We begin with the raw amino-acid sequence, 141 residues long: Large ribosomal subunit protein uL16 (141 aa).

Belongs to the universal ribosomal protein uL16 family. Part of the 50S ribosomal subunit.

Binds 23S rRNA and is also seen to make contacts with the A and possibly P site tRNAs. The chain is Large ribosomal subunit protein uL16 from Geobacillus kaustophilus (strain HTA426).